The sequence spans 402 residues: DNA replication and repair protein RecF (402 aa).

ATP is bound at residue 30–37; that stretch reads GYNGIGKT.

It belongs to the RecF family.

The protein resides in the cytoplasm. In terms of biological role, the RecF protein is involved in DNA metabolism; it is required for DNA replication and normal SOS inducibility. RecF binds preferentially to single-stranded, linear DNA. It also seems to bind ATP. The protein is DNA replication and repair protein RecF of Pseudarthrobacter chlorophenolicus (strain ATCC 700700 / DSM 12829 / CIP 107037 / JCM 12360 / KCTC 9906 / NCIMB 13794 / A6) (Arthrobacter chlorophenolicus).